A 219-amino-acid polypeptide reads, in one-letter code: Maleylacetoacetate isomerase (219 aa).

In terms of domain architecture, GST N-terminal spans N4 to P87. Glutathione-binding positions include S14–R19, Q45, Q71–S72, Q111, and N115–K117. Positions G92–P217 constitute a GST C-terminal domain.

It belongs to the GST superfamily. Zeta family. Glutathione is required as a cofactor.

The enzyme catalyses 4-maleylacetoacetate = 4-fumarylacetoacetate. Its pathway is amino-acid degradation; L-phenylalanine degradation; acetoacetate and fumarate from L-phenylalanine: step 5/6. The sequence is that of Maleylacetoacetate isomerase (mai) from Dictyostelium discoideum (Social amoeba).